A 377-amino-acid polypeptide reads, in one-letter code: N-acetylgalactosamine-6-phosphate deacetylase (377 aa).

Glu-125 serves as a coordination point for a divalent metal cation. Substrate is bound at residue 136-137 (AH). A divalent metal cation is bound by residues His-191 and His-212. Substrate contacts are provided by residues 215-216 (NG), Arg-223, and 244-247 (DGHH). The Proton donor/acceptor role is filled by Asp-269. 302 to 304 (LAG) lines the substrate pocket.

The protein belongs to the metallo-dependent hydrolases superfamily. NagA family. A divalent metal cation serves as cofactor.

It catalyses the reaction N-acetyl-D-galactosamine 6-phosphate + H2O = D-galactosamine 6-phosphate + acetate. Functionally, catalyzes the deacetylation of N-acetyl-D-galactosamine 6-phosphate to D-galactosamine 6-phosphate. Can probably also catalyze the deacetylation of N-acetyl-D-glucosamine 6-phosphate to D-glucosamine 6-phosphate. This chain is N-acetylgalactosamine-6-phosphate deacetylase (agaA), found in Escherichia coli O157:H7.